We begin with the raw amino-acid sequence, 240 residues long: Phosphoenolpyruvate guanylyltransferase (240 aa).

Phosphoenolpyruvate-binding residues include threonine 161, glycine 178, and serine 181.

This sequence belongs to the CofC family.

It carries out the reaction phosphoenolpyruvate + GTP + H(+) = enolpyruvoyl-2-diphospho-5'-guanosine + diphosphate. Its pathway is cofactor biosynthesis; coenzyme F420 biosynthesis. Functionally, guanylyltransferase that catalyzes the activation of phosphoenolpyruvate (PEP) as enolpyruvoyl-2-diphospho-5'-guanosine, via the condensation of PEP with GTP. It is involved in the biosynthesis of coenzyme F420, a hydride carrier cofactor. In Rhodococcus opacus (strain B4), this protein is Phosphoenolpyruvate guanylyltransferase.